We begin with the raw amino-acid sequence, 155 residues long: Molybdopterin synthase catalytic subunit 2 (155 aa).

Residues 101-102 (HR), lysine 117, and 124-126 (KKE) contribute to the substrate site.

It belongs to the MoaE family. MOCS2B subfamily. As to quaternary structure, heterotetramer; composed of 2 small (MOCS2A) and 2 large (MOCS2B) subunits.

Its subcellular location is the cytoplasm. It carries out the reaction 2 [molybdopterin-synthase sulfur-carrier protein]-C-terminal-Gly-aminoethanethioate + cyclic pyranopterin phosphate + H2O = molybdopterin + 2 [molybdopterin-synthase sulfur-carrier protein]-C-terminal Gly-Gly + 2 H(+). It participates in cofactor biosynthesis; molybdopterin biosynthesis. Catalytic subunit of the molybdopterin synthase complex, a complex that catalyzes the conversion of precursor Z into molybdopterin. Acts by mediating the incorporation of 2 sulfur atoms from thiocarboxylated MOCS2A into precursor Z to generate a dithiolene group. In Aedes aegypti (Yellowfever mosquito), this protein is Molybdopterin synthase catalytic subunit 2.